The sequence spans 316 residues: Methionyl-tRNA formyltransferase (316 aa).

G112–P115 serves as a coordination point for (6S)-5,6,7,8-tetrahydrofolate.

Belongs to the Fmt family.

The catalysed reaction is L-methionyl-tRNA(fMet) + (6R)-10-formyltetrahydrofolate = N-formyl-L-methionyl-tRNA(fMet) + (6S)-5,6,7,8-tetrahydrofolate + H(+). In terms of biological role, attaches a formyl group to the free amino group of methionyl-tRNA(fMet). The formyl group appears to play a dual role in the initiator identity of N-formylmethionyl-tRNA by promoting its recognition by IF2 and preventing the misappropriation of this tRNA by the elongation apparatus. This chain is Methionyl-tRNA formyltransferase, found in Chlamydia muridarum (strain MoPn / Nigg).